A 158-amino-acid chain; its full sequence is NADH-quinone oxidoreductase subunit B (158 aa).

[4Fe-4S] cluster is bound by residues cysteine 37, cysteine 38, cysteine 102, and cysteine 132.

This sequence belongs to the complex I 20 kDa subunit family. In terms of assembly, NDH-1 is composed of 14 different subunits. Subunits NuoB, C, D, E, F, and G constitute the peripheral sector of the complex. The cofactor is [4Fe-4S] cluster.

The protein resides in the cell inner membrane. It catalyses the reaction a quinone + NADH + 5 H(+)(in) = a quinol + NAD(+) + 4 H(+)(out). Functionally, NDH-1 shuttles electrons from NADH, via FMN and iron-sulfur (Fe-S) centers, to quinones in the respiratory chain. Couples the redox reaction to proton translocation (for every two electrons transferred, four hydrogen ions are translocated across the cytoplasmic membrane), and thus conserves the redox energy in a proton gradient. This Nitrosomonas europaea (strain ATCC 19718 / CIP 103999 / KCTC 2705 / NBRC 14298) protein is NADH-quinone oxidoreductase subunit B.